A 203-amino-acid chain; its full sequence is Recombination protein RecR (203 aa).

The C4-type zinc-finger motif lies at 57 to 72; that stretch reads CQRCRTLAETPLCSIC. The Toprim domain maps to 80-175; that stretch reads GLLCVVESPA…RLSRLAYGVP (96 aa).

The protein belongs to the RecR family.

Functionally, may play a role in DNA repair. It seems to be involved in an RecBC-independent recombinational process of DNA repair. It may act with RecF and RecO. This is Recombination protein RecR from Chromohalobacter salexigens (strain ATCC BAA-138 / DSM 3043 / CIP 106854 / NCIMB 13768 / 1H11).